The primary structure comprises 253 residues: uncharacterized protein (253 aa).

Residues 62-78 (WCSIGWSIGALIIFLVY) traverse the membrane as a helical segment. The segment covering 141–158 (TTPQTTTPEIPSSTEPQE) has biased composition (low complexity). The disordered stretch occupies residues 141-225 (TTPQTTTPEI…HDNQPLEERH (85 aa)). Residues 200 to 216 (NVEDEPPPNKPEEEEDH) show a composition bias toward acidic residues.

The protein localises to the host membrane. This is an uncharacterized protein from Aedes vexans (Inland floodwater mosquito).